Reading from the N-terminus, the 77-residue chain is NAD(P)H-quinone oxidoreductase subunit L (77 aa).

The next 2 helical transmembrane spans lie at 10–30 and 48–68; these read LLIA…LPAG and LVMY…SPFL.

This sequence belongs to the complex I NdhL subunit family. As to quaternary structure, NDH-1 can be composed of about 15 different subunits; different subcomplexes with different compositions have been identified which probably have different functions.

The protein localises to the cellular thylakoid membrane. The enzyme catalyses a plastoquinone + NADH + (n+1) H(+)(in) = a plastoquinol + NAD(+) + n H(+)(out). It carries out the reaction a plastoquinone + NADPH + (n+1) H(+)(in) = a plastoquinol + NADP(+) + n H(+)(out). Functionally, NDH-1 shuttles electrons from an unknown electron donor, via FMN and iron-sulfur (Fe-S) centers, to quinones in the respiratory and/or the photosynthetic chain. The immediate electron acceptor for the enzyme in this species is believed to be plastoquinone. Couples the redox reaction to proton translocation, and thus conserves the redox energy in a proton gradient. Cyanobacterial NDH-1 also plays a role in inorganic carbon-concentration. This chain is NAD(P)H-quinone oxidoreductase subunit L, found in Picosynechococcus sp. (strain ATCC 27264 / PCC 7002 / PR-6) (Agmenellum quadruplicatum).